A 155-amino-acid chain; its full sequence is Transcription antitermination protein NusB (155 aa).

It belongs to the NusB family.

In terms of biological role, involved in transcription antitermination. Required for transcription of ribosomal RNA (rRNA) genes. Binds specifically to the boxA antiterminator sequence of the ribosomal RNA (rrn) operons. The sequence is that of Transcription antitermination protein NusB from Vibrio atlanticus (strain LGP32) (Vibrio splendidus (strain Mel32)).